Consider the following 1103-residue polypeptide: Activity-dependent neuroprotector homeobox protein (1103 aa).

Residues K39 and K72 each participate in a glycyl lysine isopeptide (Lys-Gly) (interchain with G-Cter in SUMO2) cross-link. Residues 74–97 (FCCSACPFSSKFFSAYKSHFRNVH) form a C2H2-type 1; degenerate zinc finger. S98 is modified (phosphoserine). Residues 107 to 129 (LNCPYCTFNADKKTLETHIKIFH) form a C2H2-type 2; degenerate zinc finger. The disordered stretch occupies residues 133–154 (SSAPSSSLSTFKDKNKNDGLKP). The segment covering 143–154 (FKDKNKNDGLKP) has biased composition (basic and acidic residues). Glycyl lysine isopeptide (Lys-Gly) (interchain with G-Cter in SUMO2) cross-links involve residues K144 and K155. Residues 165–188 (YYCKKCTYRDPLYEIVRKHIYREH) form a C2H2-type 3; degenerate zinc finger. Residues K203, K231, K266, K274, K278, K279, K311, and K335 each participate in a glycyl lysine isopeptide (Lys-Gly) (interchain with G-Cter in SUMO2) cross-link. Residues 221 to 244 (IHCKRCLFMPKSYEALVQHVIEDH) form a C2H2-type 4; degenerate zinc finger. At R348 the chain carries Asymmetric dimethylarginine. Residues 354 to 361 (NAPVSIPQ) form a neuroprotective peptide (NAP) region. The interval 360–439 (PQQSQSVKQL…PAATGPPPSN (80 aa)) is disordered. Residues K367 and K408 each participate in a glycyl lysine isopeptide (Lys-Gly) (interchain with G-Cter in SUMO2) cross-link. A compositionally biased stretch (polar residues) spans 393–423 (SLQTANTSSLPPGQVKSPSVSQSQASRVLGQ). Phosphoserine occurs at positions 409 and 413. Residue K427 forms a Glycyl lysine isopeptide (Lys-Gly) (interchain with G-Cter in SUMO2) linkage. The segment covering 427 to 438 (KPPPAATGPPPS) has biased composition (pro residues). A C2H2-type 5; atypical zinc finger spans residues 447–469 (KICTICNELFPENVYSVHFEKEH). 2 C2H2-type zinc fingers span residues 489-510 (SKCL…MLIH) and 512-535 (LSCP…RMVH). Residues K600 and K606 each participate in a glycyl lysine isopeptide (Lys-Gly) (interchain with G-Cter in SUMO2) cross-link. Phosphoserine is present on S608. Residues K616, K621, K632, and K658 each participate in a glycyl lysine isopeptide (Lys-Gly) (interchain with G-Cter in SUMO2) cross-link. Residues 622–647 (TLCPLCFSILKGPISDALAHHLRERH) form a C2H2-type 8; atypical zinc finger. The C2H2-type 9; atypical zinc finger occupies 662–686 (YKCIHCLGVYTSNMTASTITLHLVH). The segment at 691-712 (GKTQNGQDKTNAPSRLNQSPGL) is disordered. The span at 692 to 710 (KTQNGQDKTNAPSRLNQSP) shows a compositional bias: polar residues. A Glycyl lysine isopeptide (Lys-Gly) (interchain with G-Cter in SUMO2) cross-link involves residue K699. S709 is subject to Phosphoserine. Glycyl lysine isopeptide (Lys-Gly) (interchain with G-Cter in SUMO2) cross-links involve residues K716, K728, and K731. S738 is modified (phosphoserine). K745 participates in a covalent cross-link: Glycyl lysine isopeptide (Lys-Gly) (interchain with G-Cter in SUMO2). The homeobox DNA-binding region spans 754–814 (LDPKGHEDDS…SNKRKKCVRD (61 aa)). A Phosphoserine modification is found at S805. Residues K807, K829, and K835 each participate in a glycyl lysine isopeptide (Lys-Gly) (interchain with G-Cter in SUMO2) cross-link. The interval 873-1029 (DSFSDSFEHL…VQDDTEQLKW (157 aa)) is disordered. A phosphoserine mark is found at S876, S878, S886, S889, and S905. Glycyl lysine isopeptide (Lys-Gly) (interchain with G-Cter in SUMO2) cross-links involve residues K914, K929, and K936. The span at 922–954 (ESEKLDQKEEEDGSKYETIHLTEERAKLMHDAS) shows a compositional bias: basic and acidic residues. 2 positions are modified to phosphoserine: S954 and S956. Residues 972 to 982 (PSESGPGSRQV) are compositionally biased toward polar residues. A Glycyl lysine isopeptide (Lys-Gly) (interchain with G-Cter in SUMO2) cross-link involves residue K1017. 2 positions are modified to N6-acetyllysine; alternate: K1036 and K1043. Residues K1036 and K1043 each participate in a glycyl lysine isopeptide (Lys-Gly) (interchain with G-Cter in SUMO2); alternate cross-link. The interval 1045–1103 (QSQWENASENAERLPNPQIEWQNSTIDSEDGEQFDSMTDGVADPMHGSLTGVKLSSQQA) is disordered. S1072 bears the Phosphoserine mark.

As to quaternary structure, interacts (via N-terminal region) with beta-catenin/CTNNB1 (via the central armadillo domains); interaction is direct and stabilizes CTNNB1 by modulating its phosphorylation by glycogen synthase kinase-3 beta GSK3B.

It localises to the nucleus. The protein localises to the chromosome. Functionally, may be involved in transcriptional regulation. May mediate some of the neuroprotective peptide VIP-associated effects involving normal growth and cancer proliferation. Positively modulates WNT-beta-catenin/CTNN1B signaling, acting by regulating phosphorylation of, and thereby stabilizing, CTNNB1. May be required for neural induction and neuronal differentiation. May be involved in erythroid differentiation. In Rattus norvegicus (Rat), this protein is Activity-dependent neuroprotector homeobox protein (Adnp).